Consider the following 317-residue polypeptide: Transaldolase (317 aa).

The active-site Schiff-base intermediate with substrate is the lysine 132.

Belongs to the transaldolase family. Type 1 subfamily. Homodimer.

It localises to the cytoplasm. The catalysed reaction is D-sedoheptulose 7-phosphate + D-glyceraldehyde 3-phosphate = D-erythrose 4-phosphate + beta-D-fructose 6-phosphate. It participates in carbohydrate degradation; pentose phosphate pathway; D-glyceraldehyde 3-phosphate and beta-D-fructose 6-phosphate from D-ribose 5-phosphate and D-xylulose 5-phosphate (non-oxidative stage): step 2/3. Functionally, transaldolase is important for the balance of metabolites in the pentose-phosphate pathway. This Shigella dysenteriae serotype 1 (strain Sd197) protein is Transaldolase.